Consider the following 310-residue polypeptide: Mas-related G-protein coupled receptor member E (310 aa).

Over 1–22 the chain is Extracellular; that stretch reads MTSLSVHTDSPSTQGEMAFNLT. Asn20 carries N-linked (GlcNAc...) asparagine glycosylation. The helical transmembrane segment at 23–43 threads the bilayer; that stretch reads ILSLTELLSLGGLLGNGVALW. Topologically, residues 44–60 are cytoplasmic; that stretch reads LLNQNVYRNPFSIYLLD. The helical transmembrane segment at 61-81 threads the bilayer; sequence VACADLIFLCCHMVAIIPELL. Topologically, residues 82-92 are extracellular; it reads QDQLNFPEFVH. The helical transmembrane segment at 93-113 threads the bilayer; that stretch reads ISLTMLRFFCYIVGLSLLAAI. At 114-133 the chain is on the cytoplasmic side; that stretch reads STEQCLATLFPAWYLCRRPR. The chain crosses the membrane as a helical span at residues 134 to 154; that stretch reads YLTTCVCALIWVLCLLLDLLL. Over 155–174 the chain is Extracellular; it reads SGACTQFFGAPSYHLCDMLW. The helical transmembrane segment at 175-195 threads the bilayer; that stretch reads LVVAVLLAALCCTMCVTSLLL. Topologically, residues 196 to 213 are cytoplasmic; the sequence is LLRVERGPERHQPRGFPT. A helical membrane pass occupies residues 214 to 234; the sequence is LVLLAVLLFLFCGLPFGIFWL. The Extracellular portion of the chain corresponds to 235-248; the sequence is SKNLSWHIPLYFYH. A glycan (N-linked (GlcNAc...) asparagine) is linked at Asn237. Residues 249–269 form a helical membrane-spanning segment; the sequence is FSFFMASVHSAAKPAIYFFLG. Residues 270–310 lie on the Cytoplasmic side of the membrane; sequence STPGQRFREPLRLVLQRALGDEAELGAGREASQGGLVDMTV.

This sequence belongs to the G-protein coupled receptor 1 family. Mas subfamily.

The protein resides in the cell membrane. Its function is as follows. Orphan receptor. May regulate nociceptor function and/or development, including the sensation or modulation of pain. This chain is Mas-related G-protein coupled receptor member E (Mrgpre), found in Mus musculus (Mouse).